We begin with the raw amino-acid sequence, 502 residues long: Probable cytosol aminopeptidase (502 aa).

Residues K269 and D274 each contribute to the Mn(2+) site. Residue K281 is part of the active site. Positions 292, 351, and 353 each coordinate Mn(2+). The active site involves R355.

It belongs to the peptidase M17 family. Mn(2+) is required as a cofactor.

The protein localises to the cytoplasm. The catalysed reaction is Release of an N-terminal amino acid, Xaa-|-Yaa-, in which Xaa is preferably Leu, but may be other amino acids including Pro although not Arg or Lys, and Yaa may be Pro. Amino acid amides and methyl esters are also readily hydrolyzed, but rates on arylamides are exceedingly low.. The enzyme catalyses Release of an N-terminal amino acid, preferentially leucine, but not glutamic or aspartic acids.. In terms of biological role, presumably involved in the processing and regular turnover of intracellular proteins. Catalyzes the removal of unsubstituted N-terminal amino acids from various peptides. This chain is Probable cytosol aminopeptidase, found in Shewanella loihica (strain ATCC BAA-1088 / PV-4).